Consider the following 361-residue polypeptide: Phosphoserine aminotransferase (361 aa).

R42 is an L-glutamate binding site. Pyridoxal 5'-phosphate-binding positions include 76-77 (AR), W102, T153, D173, and Q196. The residue at position 197 (K197) is an N6-(pyridoxal phosphate)lysine. 238 to 239 (NT) lines the pyridoxal 5'-phosphate pocket.

Belongs to the class-V pyridoxal-phosphate-dependent aminotransferase family. SerC subfamily. As to quaternary structure, homodimer. The cofactor is pyridoxal 5'-phosphate.

It is found in the cytoplasm. The enzyme catalyses O-phospho-L-serine + 2-oxoglutarate = 3-phosphooxypyruvate + L-glutamate. It carries out the reaction 4-(phosphooxy)-L-threonine + 2-oxoglutarate = (R)-3-hydroxy-2-oxo-4-phosphooxybutanoate + L-glutamate. It functions in the pathway amino-acid biosynthesis; L-serine biosynthesis; L-serine from 3-phospho-D-glycerate: step 2/3. The protein operates within cofactor biosynthesis; pyridoxine 5'-phosphate biosynthesis; pyridoxine 5'-phosphate from D-erythrose 4-phosphate: step 3/5. Functionally, catalyzes the reversible conversion of 3-phosphohydroxypyruvate to phosphoserine and of 3-hydroxy-2-oxo-4-phosphonooxybutanoate to phosphohydroxythreonine. The protein is Phosphoserine aminotransferase of Mannheimia succiniciproducens (strain KCTC 0769BP / MBEL55E).